We begin with the raw amino-acid sequence, 354 residues long: Uroporphyrinogen decarboxylase (354 aa).

Substrate is bound by residues 27-31, D77, Y154, S209, and H327; that span reads RQAGR.

Belongs to the uroporphyrinogen decarboxylase family. In terms of assembly, homodimer.

It is found in the cytoplasm. It carries out the reaction uroporphyrinogen III + 4 H(+) = coproporphyrinogen III + 4 CO2. It participates in porphyrin-containing compound metabolism; protoporphyrin-IX biosynthesis; coproporphyrinogen-III from 5-aminolevulinate: step 4/4. In terms of biological role, catalyzes the decarboxylation of four acetate groups of uroporphyrinogen-III to yield coproporphyrinogen-III. In Teredinibacter turnerae (strain ATCC 39867 / T7901), this protein is Uroporphyrinogen decarboxylase.